The following is an 816-amino-acid chain: MESGCGLGTLCLLLCLGPVVGFGVDPSLQIDVLSELGLPGYAAGVRQVPGLHNGSKAFLFPDTSRSVKASPETAEIFFQKLRNKYEFTILVTLKQAHLNSGVIFSIHHLDHRYLELESSGHRNEIRLHYRTGSHRSHTEVFPYILADDKWHRLSLAISASHLILHVDCNKIYERVVEKPFMDLPVGTTFWLGQRNNAHGYFKGIMQDVQLLVMPQGFISQCPDLNRTCPTCNDFHGLVQKIMELQDILAKTSAKLSQAEQRMNKLDQCYCERTCTMKGMTYREFESWTDGCKNCTCMNGTVQCEALICSLSDCPPNSALSYVDGKCCKECQSVCIFEGRTYFEGQRETVYSSSGDCVLFECKDHKMQRIPKDSCATLNCPESQQIPLSHSCCKICKGHDFCTEGHNCMEHSVCRNLDDRAVCSCRDGFRALREDNAYCEDVDECAEGQHYCRENTMCVNTPGSFMCICKTGYIRIDDYSCTEHDECVTNQHNCDENALCFNTVGGHNCVCKLGYTGNGTVCKAFCKDGCRNGGACIASNVCACPQGFTGPSCETDIDECSDGFVQCDSRANCINLPGWYHCECRDGYHDNGMFSPSGESCEDIDECATGRHSCANDTVCFNLDGGYDCRCPHGKNCTGDCIHEDKIKHNGQIWVLENDRCSVCSCQSGYVMCRRMVCDCENPTVDLFCCPECDPRLSSQCLHQSGELSYNSGDSWIQNCQQCRCLQGEVDCWPLPCPEVDCEFSVLPENECCPRCVTDPCQADTIRNDITKTCLDETNVVRFTGSSWIKHGTECTLCQCKNGHVCCSVDPQCLQEL.

An N-terminal signal peptide occupies residues 1 to 21 (MESGCGLGTLCLLLCLGPVVG). Residues N53, N225, N293, and N298 are each glycosylated (N-linked (GlcNAc...) asparagine). The Laminin G-like domain maps to 65–228 (RSVKASPETA…SQCPDLNRTC (164 aa)). In terms of domain architecture, VWFC 1 spans 272–331 (RTCTMKGMTYREFESWTDGCKNCTCMNGTVQCEALICSLSDCPPNSALSYVDGKCCKECQ). Residues 397 to 439 (GHDFCTEGHNCMEHSVCRNLDDRAVCSCRDGFRALREDNAYCE) enclose the EGF-like 1 domain. 18 cysteine pairs are disulfide-bonded: C401–C413, C407–C422, C424–C438, C444–C457, C451–C466, C468–C480, C486–C499, C493–C508, C510–C521, C525–C535, C529–C541, C543–C552, C559–C572, C566–C581, C583–C600, C606–C619, C613–C628, and C630–C636. Positions 440 to 481 (DVDECAEGQHYCRENTMCVNTPGSFMCICKTGYIRIDDYSCT) constitute an EGF-like 2; calcium-binding domain. The region spanning 482 to 522 (EHDECVTNQHNCDENALCFNTVGGHNCVCKLGYTGNGTVCK) is the EGF-like 3; calcium-binding domain. A glycan (N-linked (GlcNAc...) asparagine) is linked at N517. One can recognise an EGF-like 4 domain in the interval 523 to 553 (AFCKDGCRNGGACIASNVCACPQGFTGPSCE). One can recognise an EGF-like 5; calcium-binding domain in the interval 555-601 (DIDECSDGFVQCDSRANCINLPGWYHCECRDGYHDNGMFSPSGESCE). Residues 602-637 (DIDECATGRHSCANDTVCFNLDGGYDCRCPHGKNCT) enclose the EGF-like 6; calcium-binding domain. N-linked (GlcNAc...) asparagine glycosylation is found at N615 and N635. VWFC domains are found at residues 638 to 693 (GDCI…PECD) and 698 to 756 (SQCL…PRCV).

In terms of tissue distribution, strongly expressed in early embryonic neural tissues (brain, spinal cord, dorsal root ganglia); less in other tissues such as cells around cartilage, myocardium, lung mesenchymal cells, and liver. After hatching expression is restricted to neural tissues including retina.

This Gallus gallus (Chicken) protein is Protein NEL (NEL).